A 2211-amino-acid chain; its full sequence is Orsellinic acid synthase (2211 aa).

The interval 44 to 246 is N-terminal acylcarrier protein transacylase domain (SAT); the sequence is TFREQVSDAI…TVAVVHSLYH (203 aa). A Ketosynthase family 3 (KS3) domain is found at 380–805; the sequence is WDDIAIVGMA…GSNAAVIIGE (426 aa). Residues Cys-549, His-684, and His-724 each act as for beta-ketoacyl synthase activity in the active site. A malonyl-CoA:ACP transacylase (MAT) domain region spans residues 910-1228; sequence VFIFSGQGSQ…QLTTLKKNVP (319 aa). Ser-1006 serves as the catalytic For acyl/malonyl transferase activity. Residues 1309–1440 form an N-terminal hotdog fold region; the sequence is HAIQKLSHGA…GVVKQSNMAS (132 aa). In terms of domain architecture, PKS/mFAS DH spans 1309-1629; sequence HAIQKLSHGA…FQHVKIPLIE (321 aa). The tract at residues 1334-1573 is product template (PT) domain; sequence EFIEGHLVCG…GATTLRAPVV (240 aa). The active-site Proton acceptor; for dehydratase activity is the His-1339. Residues 1473 to 1629 form a C-terminal hotdog fold region; sequence VQVFSKRAMY…FQHVKIPLIE (157 aa). Catalysis depends on Asp-1537, which acts as the Proton donor; for dehydratase activity. Carrier domains follow at residues 1681 to 1755 and 1787 to 1865; these read AAPE…EALS and STVD…VKRP. Ser-1715 carries the post-translational modification O-(pantetheine 4'-phosphoryl)serine. The disordered stretch occupies residues 1755 to 1786; that stretch reads SPTPVGNDVDNDSPTPGSERGSDSAISTPASV. Ser-1824 is subject to O-(pantetheine 4'-phosphoryl)serine. The tract at residues 1937 to 2204 is thioesterase (TE) domain; that stretch reads SGKSPLFLIH…AAVSAALVDA (268 aa).

The enzyme catalyses 3 malonyl-CoA + acetyl-CoA + 2 H(+) = orsellinate + 3 CO2 + 4 CoA. The protein operates within secondary metabolite biosynthesis. Its function is as follows. Non-reducing polyketide synthase; part of the gene cluster that mediates the biosynthesis of the bibenzoquinone oosporein, a metabolite required for fungal virulence that acts by evading host immunity to facilitate fungal multiplication in insects. The non-reducing polyketide synthase OpS1 produces orsellinic acid by condensing acetyl-CoA with 3 malonyl-CoA units. Orsellinic acid is then hydroxylated to benzenetriol by the hydroxylase OpS4. The intermediate is oxidized either nonenzymatically to 5,5'-dideoxy-oosporein or enzymatically to benzenetetrol by the oxidoreductase OpS7. The latter is further dimerized to oosporein by the catalase OpS5. OpS6 probably functions en route for protecting cells against oxidative stress by scavenging any leaked free radical form of benzenetetrol by activating the thiol group of glutathione. The polypeptide is Orsellinic acid synthase (Beauveria bassiana (strain ARSEF 2860) (White muscardine disease fungus)).